A 1402-amino-acid polypeptide reads, in one-letter code: Defective in tip formation protein A (1402 aa).

4 disordered regions span residues 1–20 (MKDI…PPQI), 37–94 (NVTT…PQIV), 109–133 (NTPS…DNDI), and 210–292 (KQSS…RRLK). 2 repeat units span residues 12–18 (TTTVAPP) and 40–46 (TTTVQPP). A 4 X 7 AA repeat of T-T-T-[IV]-[AQ]-P-P region spans residues 12–92 (TTTVAPPQIN…TTTTTVQPPQ (81 aa)). Low complexity predominate over residues 38–47 (VTTTTVQPPQ). A compositionally biased stretch (pro residues) spans 48–58 (IVSPPSPPSPP). Low complexity predominate over residues 59-94 (QTTTIAPPTILPTTKTTTTTTTTTTTTTTVQPPQIV). A run of 2 repeats spans residues 60–66 (TTTIAPP) and 86–92 (TTVQPPQ). Residues 210–234 (KQSSQSQLQQQLSSQSLQQIQQKSK) show a composition bias toward low complexity. Residues 235-253 (QPPPQQQQQQQPPPPPIPL) show a composition bias toward pro residues. The span at 254–279 (LPQIHQQLKPKQQQEQQQQQEQQQQQ) shows a compositional bias: low complexity. The stretch at 350-383 (QRIKSFIENHKKKKQKYREYQSEKNQQQKSNSKK) forms a coiled coil. Disordered regions lie at residues 429–453 (DQQQ…SPMT) and 712–745 (NNNN…NLSN). Positions 430-453 (QQQQQQQQQQSTMTTTSSSSSPMT) are enriched in low complexity.

It localises to the cell surface. Its function is as follows. Required for correct organization of the actin cytoskeleton and cytokinesis. Also required for apical sorting of prestalk cells, a prerequisite for formation of the tip at the mound stage and subsequent formation of the fruiting body. May be required for cell adhesion. This chain is Defective in tip formation protein A (dtfA), found in Dictyostelium discoideum (Social amoeba).